The following is a 1222-amino-acid chain: DNA-directed RNA polymerase II subunit RPB2 (1222 aa).

Residue Asp835 participates in Mg(2+) binding. 4 residues coordinate Zn(2+): Cys1161, Cys1164, Cys1180, and Cys1183. The C4-type zinc finger occupies 1161–1183 (CGICGLMTVVAKLKHNQFECRGC).

The protein belongs to the RNA polymerase beta chain family. In terms of assembly, component of the RNA polymerase II (Pol II) complex consisting of 12 subunits.

It is found in the nucleus. The catalysed reaction is RNA(n) + a ribonucleoside 5'-triphosphate = RNA(n+1) + diphosphate. DNA-dependent RNA polymerase catalyzes the transcription of DNA into RNA using the four ribonucleoside triphosphates as substrates. Second largest component of RNA polymerase II which synthesizes mRNA precursors and many functional non-coding RNAs. Proposed to contribute to the polymerase catalytic activity and forms the polymerase active center together with the largest subunit. Pol II is the central component of the basal RNA polymerase II transcription machinery. It is composed of mobile elements that move relative to each other. RPB2 is part of the core element with the central large cleft, the clamp element that moves to open and close the cleft and the jaws that are thought to grab the incoming DNA template. This is DNA-directed RNA polymerase II subunit RPB2 (RPB2) from Eremothecium gossypii (strain ATCC 10895 / CBS 109.51 / FGSC 9923 / NRRL Y-1056) (Yeast).